Reading from the N-terminus, the 371-residue chain is Putative RING finger protein ORF117 (371 aa).

The RING-type zinc finger occupies 72–108 (CCICFRKDVIYKEVPCGHYICVECYKEPIRNVCPECN). The segment covering 178 to 192 (EEEMNESEAEEEEPV) has biased composition (acidic residues). Positions 178-218 (EEEMNESEAEEEEPVPEIAQFEALNTPPPPPTNRRPKIRRP) are disordered.

The chain is Putative RING finger protein ORF117 from Magallana gigas (Pacific oyster).